The primary structure comprises 350 residues: uncharacterized protein (350 aa).

The next 3 membrane-spanning stretches (helical) occupy residues 10 to 30, 51 to 71, and 327 to 347; these read YSFILCLAVGSVTIYTSEVIG, FAGILFTALVQLFSPTPVTLT, and ILSLFSVLFTCIVAGLFLKLF.

Belongs to the 1-acyl-sn-glycerol-3-phosphate acyltransferase family.

The protein resides in the endoplasmic reticulum membrane. This is an uncharacterized protein from Schizosaccharomyces pombe (strain 972 / ATCC 24843) (Fission yeast).